The primary structure comprises 361 residues: D-malate dehydrogenase [decarboxylating] (361 aa).

Mn(2+) is bound by residues Asp224, Asp248, and Asp252.

Belongs to the isocitrate and isopropylmalate dehydrogenases family. Mg(2+) is required as a cofactor. Mn(2+) serves as cofactor.

The protein resides in the cytoplasm. It catalyses the reaction (R)-malate + NAD(+) = pyruvate + CO2 + NADH. Catalyzes the NAD(+)-dependent oxidative decarboxylation of D-malate into pyruvate. Is essential for aerobic growth on D-malate as the sole carbon source. But is not required for anaerobic D-malate utilization, although DmlA is expressed and active in those conditions. Appears to be not able to use L-tartrate as a substrate for dehydrogenation instead of D-malate. In Escherichia coli (strain K12), this protein is D-malate dehydrogenase [decarboxylating] (dmlA).